The chain runs to 82 residues: Small ribosomal subunit protein bS16 (82 aa).

This sequence belongs to the bacterial ribosomal protein bS16 family.

This chain is Small ribosomal subunit protein bS16, found in Pseudoalteromonas translucida (strain TAC 125).